A 160-amino-acid chain; its full sequence is Small ribosomal subunit protein uS7 (160 aa).

Belongs to the universal ribosomal protein uS7 family. As to quaternary structure, part of the 30S ribosomal subunit. Contacts proteins S9 and S11.

Functionally, one of the primary rRNA binding proteins, it binds directly to 16S rRNA where it nucleates assembly of the head domain of the 30S subunit. Is located at the subunit interface close to the decoding center, probably blocks exit of the E-site tRNA. The sequence is that of Small ribosomal subunit protein uS7 from Rickettsia prowazekii (strain Madrid E).